Consider the following 69-residue polypeptide: Nodulin-3 (69 aa).

Residues 1 to 24 form the signal peptide; the sequence is MAKILKFVFAIILFFSLFLLSMEA.

The polypeptide is Nodulin-3 (ENOD3) (Pisum sativum (Garden pea)).